The following is a 468-amino-acid chain: Ubiquitin carboxyl-terminal hydrolase MINDY-1 (468 aa).

Residues 1–19 (MEQPQTENPAPSKATSAET) are compositionally biased toward polar residues. The tract at residues 1 to 105 (MEQPQTENPA…RPQELPQSPR (105 aa)) is disordered. The segment covering 22–41 (SENHEALSGPEKHPQDKDGA) has biased composition (basic and acidic residues). Over residues 43-54 (ADGAAGEQEPGD) the composition is skewed to low complexity. Residues 68–80 (CPPPEASSSPPGP) are compositionally biased toward pro residues. S103 is modified (phosphoserine). C137 acts as the Nucleophile in catalysis. H319 (proton acceptor) is an active-site residue. The tract at residues 388-427 (QVDQDYLIALSLQQQQQPQGTLGLSDLELAQQLQQEEYQQ) is ubiquitin-binding domain (UBD). Residues 423-432 (EEYQQQQAVQ) show a composition bias toward low complexity. The interval 423 to 468 (EEYQQQQAVQPVRTRAPSPQGRGATSGRPAGERRQRSKTESDCVLL) is disordered. At S440 the chain carries Phosphoserine. Over residues 452 to 468 (AGERRQRSKTESDCVLL) the composition is skewed to basic and acidic residues.

Belongs to the MINDY deubiquitinase family. FAM63 subfamily.

It carries out the reaction Thiol-dependent hydrolysis of ester, thioester, amide, peptide and isopeptide bonds formed by the C-terminal Gly of ubiquitin (a 76-residue protein attached to proteins as an intracellular targeting signal).. In terms of biological role, hydrolase that can specifically remove 'Lys-48'-linked conjugated ubiquitin from proteins. Has exodeubiquitinase activity and has a preference for long polyubiquitin chains. May play a regulatory role at the level of protein turnover. This chain is Ubiquitin carboxyl-terminal hydrolase MINDY-1 (Mindy1), found in Mus musculus (Mouse).